The chain runs to 311 residues: Aspartate carbamoyltransferase catalytic subunit (311 aa).

The carbamoyl phosphate site is built by Arg-55 and Thr-56. Lys-85 provides a ligand contact to L-aspartate. 3 residues coordinate carbamoyl phosphate: Arg-106, His-135, and Gln-138. Residues Arg-168 and Arg-230 each contribute to the L-aspartate site. Residues Leu-268 and Pro-269 each contribute to the carbamoyl phosphate site.

This sequence belongs to the aspartate/ornithine carbamoyltransferase superfamily. ATCase family. As to quaternary structure, heterododecamer (2C3:3R2) of six catalytic PyrB chains organized as two trimers (C3), and six regulatory PyrI chains organized as three dimers (R2).

The catalysed reaction is carbamoyl phosphate + L-aspartate = N-carbamoyl-L-aspartate + phosphate + H(+). Its pathway is pyrimidine metabolism; UMP biosynthesis via de novo pathway; (S)-dihydroorotate from bicarbonate: step 2/3. In terms of biological role, catalyzes the condensation of carbamoyl phosphate and aspartate to form carbamoyl aspartate and inorganic phosphate, the committed step in the de novo pyrimidine nucleotide biosynthesis pathway. In Salmonella paratyphi C (strain RKS4594), this protein is Aspartate carbamoyltransferase catalytic subunit.